The primary structure comprises 445 residues: Phospho-alpha-glucosidase PagL (445 aa).

Residue 4-71 (YSICIVGGGS…ELEEVIWTTD (68 aa)) participates in NAD(+) binding. Residues arginine 94 and asparagine 148 each coordinate substrate. Residue cysteine 171 participates in Mn(2+) binding. Aspartate 172 functions as the Proton donor in the catalytic mechanism. Histidine 201 lines the Mn(2+) pocket. Residue tyrosine 264 is the Proton acceptor of the active site. Arginine 284 is a substrate binding site.

Belongs to the glycosyl hydrolase 4 family. In terms of assembly, homotetramer. Requires NAD(+) as cofactor. It depends on Mn(2+) as a cofactor.

Phospho-alpha-glucosidase that catalyzes the hydrolysis of p-nitrophenyl-alpha-D-glucopyranoside 6-phosphate, but is not able to cleave 'natural' phospho-alpha-glucosides produced via the phosphoenolpyruvate-dependent sugar phosphotransferase system (PEP-PTS). This chain is Phospho-alpha-glucosidase PagL (pagL), found in Clostridium acetobutylicum (strain ATCC 824 / DSM 792 / JCM 1419 / IAM 19013 / LMG 5710 / NBRC 13948 / NRRL B-527 / VKM B-1787 / 2291 / W).